The primary structure comprises 534 residues: Glucose-6-phosphate isomerase (534 aa).

Glutamate 356 serves as the catalytic Proton donor. Active-site residues include histidine 387 and lysine 502.

This sequence belongs to the GPI family.

It is found in the cytoplasm. It carries out the reaction alpha-D-glucose 6-phosphate = beta-D-fructose 6-phosphate. Its pathway is carbohydrate biosynthesis; gluconeogenesis. It functions in the pathway carbohydrate degradation; glycolysis; D-glyceraldehyde 3-phosphate and glycerone phosphate from D-glucose: step 2/4. Catalyzes the reversible isomerization of glucose-6-phosphate to fructose-6-phosphate. The polypeptide is Glucose-6-phosphate isomerase (Desulfotalea psychrophila (strain LSv54 / DSM 12343)).